A 444-amino-acid chain; its full sequence is Deoxyguanosinetriphosphate triphosphohydrolase-like protein (444 aa).

Residues 59-250 form the HD domain; the sequence is RLTHSLEVSQ…MELADDIAYA (192 aa).

This sequence belongs to the dGTPase family. Type 2 subfamily.

In Shewanella halifaxensis (strain HAW-EB4), this protein is Deoxyguanosinetriphosphate triphosphohydrolase-like protein.